A 290-amino-acid polypeptide reads, in one-letter code: tRNA (guanine-N(7)-)-methyltransferase (290 aa).

Composition is skewed to basic and acidic residues over residues 1-12 (MSDSLHTPEEPR) and 20-43 (AHAHDGSLRHTRAKGEPRFPDGPK). A disordered region spans residues 1–49 (MSDSLHTPEEPRPGPGEQLAHAHDGSLRHTRAKGEPRFPDGPKADPAGS). S-adenosyl-L-methionine-binding residues include glutamate 104, aspartate 129, aspartate 156, and aspartate 179. The active site involves aspartate 179. Substrate contacts are provided by residues lysine 183, aspartate 215, and 252–255 (TRFE).

This sequence belongs to the class I-like SAM-binding methyltransferase superfamily. TrmB family.

The enzyme catalyses guanosine(46) in tRNA + S-adenosyl-L-methionine = N(7)-methylguanosine(46) in tRNA + S-adenosyl-L-homocysteine. It functions in the pathway tRNA modification; N(7)-methylguanine-tRNA biosynthesis. In terms of biological role, catalyzes the formation of N(7)-methylguanine at position 46 (m7G46) in tRNA. This chain is tRNA (guanine-N(7)-)-methyltransferase, found in Streptomyces avermitilis (strain ATCC 31267 / DSM 46492 / JCM 5070 / NBRC 14893 / NCIMB 12804 / NRRL 8165 / MA-4680).